A 303-amino-acid polypeptide reads, in one-letter code: Formylglycine-generating enzyme (303 aa).

8 residues coordinate Ca(2+): asparagine 188, isoleucine 189, aspartate 202, tyrosine 204, asparagine 222, valine 223, glycine 225, and valine 227. Residues cysteine 269 and cysteine 274 each contribute to the Cu(+) site.

Belongs to the sulfatase-modifying factor family. Cu(+) is required as a cofactor.

It catalyses the reaction L-cysteinyl-[sulfatase] + 2 a thiol + O2 = an organic disulfide + 3-oxo-L-alanyl-[sulfatase] + hydrogen sulfide + H2O + H(+). The protein operates within protein modification; sulfatase oxidation. Its function is as follows. Oxidase that catalyzes the conversion of cysteine to 3-oxoalanine on target proteins. 3-oxoalanine modification, which is also named formylglycine (fGly), occurs in the maturation of arylsulfatases and some alkaline phosphatases that use the hydrated form of 3-oxoalanine as a catalytic nucleophile. This is Formylglycine-generating enzyme from Thermomonospora curvata (strain ATCC 19995 / DSM 43183 / JCM 3096 / KCTC 9072 / NBRC 15933 / NCIMB 10081 / Henssen B9).